Reading from the N-terminus, the 319-residue chain is tRNA uridine(34) hydroxylase (319 aa).

The 99-residue stretch at 133 to 231 (EDPDSVVIDT…YLEDVSSENS (99 aa)) folds into the Rhodanese domain. Residue Cys191 is the Cysteine persulfide intermediate of the active site.

This sequence belongs to the TrhO family.

The catalysed reaction is uridine(34) in tRNA + AH2 + O2 = 5-hydroxyuridine(34) in tRNA + A + H2O. Its function is as follows. Catalyzes oxygen-dependent 5-hydroxyuridine (ho5U) modification at position 34 in tRNAs. This chain is tRNA uridine(34) hydroxylase, found in Prochlorococcus marinus (strain NATL1A).